A 221-amino-acid polypeptide reads, in one-letter code: Interleukin-12 subunit alpha (221 aa).

The N-terminal stretch at 1–25 (MCPLRSLLLISTLVLLHHLPHLSLG) is a signal peptide. Cystine bridges form between C39/C112, C66/C198, and C87/C125. N-linked (GlcNAc...) asparagine glycosylation is present at N95.

Belongs to the IL-6 superfamily. As to quaternary structure, heterodimer with IL12B; disulfide-linked. This heterodimer is known as interleukin IL-12. Heterodimer with EBI3/IL27B; not disulfide-linked. This heterodimer is known as interleukin IL-35. Interacts with NBR1; this interaction promotes IL-12 secretion.

It is found in the secreted. Heterodimerizes with IL12B to form the IL-12 cytokine or with EBI3/IL27B to form the IL-35 cytokine. IL-12 is primarily produced by professional antigen-presenting cells (APCs) such as B-cells and dendritic cells (DCs) as well as macrophages and granulocytes and regulates T-cell and natural killer-cell responses, induces the production of interferon-gamma (IFN-gamma), favors the differentiation of T-helper 1 (Th1) cells and is an important link between innate resistance and adaptive immunity. Mechanistically, exerts its biological effects through a receptor composed of IL12R1 and IL12R2 subunits. Binding to the receptor results in the rapid tyrosine phosphorylation of a number of cellular substrates including the JAK family kinases TYK2 and JAK2. In turn, recruited STAT4 gets phosphorylated and translocates to the nucleus where it regulates cytokine/growth factor responsive genes. As part of IL-35, plays essential roles in maintaining the immune homeostasis of the liver microenvironment and also functions as an immune-suppressive cytokine. Mediates biological events through unconventional receptors composed of IL12RB2 and gp130/IL6ST heterodimers or homodimers. Signaling requires the transcription factors STAT1 and STAT4, which form a unique heterodimer that binds to distinct DNA sites. The protein is Interleukin-12 subunit alpha (IL12A) of Bubalus carabanensis (Swamp type water buffalo).